A 360-amino-acid chain; its full sequence is uncharacterized protein (360 aa).

Positions 19–179 (LALGSGGARG…LDPLPMAPIA (161 aa)) constitute a PNPLA domain. The short motif at 50–54 (GSSMG) is the GXSXG element. Ser52 functions as the Nucleophile in the catalytic mechanism. Asp166 (proton acceptor) is an active-site residue. A DGA/G motif is present at residues 166 to 168 (DGG). The segment at 251-282 (DSWSQAPEIEQRPAGPPADREEAADTPGLPKM) is disordered.

This sequence belongs to the NTE family.

This is an uncharacterized protein from Mycobacterium bovis (strain ATCC BAA-935 / AF2122/97).